Reading from the N-terminus, the 2226-residue chain is Rotatin (2226 aa).

The disordered stretch occupies residues 295-346 (EARGPYHSPNPSPGSSSSRPSVVGRTGQRPRGDGQDWDAVSSSGSSSHTHVN). Over residues 307 to 319 (PGSSSSRPSVVGR) the composition is skewed to low complexity. At serine 311 the chain carries Phosphoserine. Lysine 813 is modified (N6-acetyllysine).

This sequence belongs to the rotatin family. Interacts with PPP1R35; this interaction allows the mutual recruitment to the centriole.

It localises to the cytoplasm. Its subcellular location is the cytoskeleton. The protein localises to the cilium basal body. In terms of biological role, involved in the genetic cascade that governs left-right specification. Required for correct asymmetric expression of NODAL, LEFTY and PITX2. The protein is Rotatin of Mus musculus (Mouse).